The chain runs to 258 residues: Heat-labile enterotoxin A chain (258 aa).

A signal peptide spans 1-18 (MKNITFIFFILLASPLYA). 25–39 (RADSRPPDEIKRSGG) is an NAD(+) binding site. Residue Glu-130 is part of the active site. Residues Cys-205 and Cys-217 are joined by a disulfide bond.

The protein belongs to the enterotoxin A family. Heterohexamer of one A chain and of five B chains.

In terms of biological role, the biological activity of the toxin is produced by the A chain, which activates intracellular adenyl cyclase. This is Heat-labile enterotoxin A chain (eltA) from Escherichia coli.